A 307-amino-acid chain; its full sequence is High-affinity branched-chain amino acid transport system permease protein BraD (307 aa).

Transmembrane regions (helical) follow at residues 21 to 41 (YALI…INFA), 45 to 65 (VYMI…MMGL), 70 to 90 (LMML…GYSI), 104 to 124 (LIPL…VMLS), 132 to 152 (IPTL…GVVI), 154 to 174 (YMQI…TLFI), 203 to 223 (IIAL…VLLG), 224 to 244 (MQYG…AFTA), 245 to 265 (AVLG…LLGV), and 280 to 300 (DVVA…GILG).

This sequence belongs to the binding-protein-dependent transport system permease family. LivHM subfamily.

The protein resides in the cell inner membrane. In terms of biological role, component of the high affinity leucine, isoleucine, valine, transport system (LIV-I), which is operative without Na(+) and is specific for alanine and threonine, in addition to branched-chain amino acids. The protein is High-affinity branched-chain amino acid transport system permease protein BraD (braD) of Pseudomonas aeruginosa (strain ATCC 15692 / DSM 22644 / CIP 104116 / JCM 14847 / LMG 12228 / 1C / PRS 101 / PAO1).